Here is a 115-residue protein sequence, read N- to C-terminus: Large ribosomal subunit protein bL19 (115 aa).

Belongs to the bacterial ribosomal protein bL19 family.

This protein is located at the 30S-50S ribosomal subunit interface and may play a role in the structure and function of the aminoacyl-tRNA binding site. The chain is Large ribosomal subunit protein bL19 from Buchnera aphidicola subsp. Schizaphis graminum (strain Sg).